Reading from the N-terminus, the 281-residue chain is Bifunctional protein FolD (281 aa).

Residues 167–169 (GRS) and Ser-192 contribute to the NADP(+) site.

The protein belongs to the tetrahydrofolate dehydrogenase/cyclohydrolase family. In terms of assembly, homodimer.

The catalysed reaction is (6R)-5,10-methylene-5,6,7,8-tetrahydrofolate + NADP(+) = (6R)-5,10-methenyltetrahydrofolate + NADPH. The enzyme catalyses (6R)-5,10-methenyltetrahydrofolate + H2O = (6R)-10-formyltetrahydrofolate + H(+). It participates in one-carbon metabolism; tetrahydrofolate interconversion. Catalyzes the oxidation of 5,10-methylenetetrahydrofolate to 5,10-methenyltetrahydrofolate and then the hydrolysis of 5,10-methenyltetrahydrofolate to 10-formyltetrahydrofolate. The sequence is that of Bifunctional protein FolD from Alcanivorax borkumensis (strain ATCC 700651 / DSM 11573 / NCIMB 13689 / SK2).